The sequence spans 36 residues: Fructose-1,6-/sedoheptulose-1,7-bisphosphate aldolase (36 aa).

This chain is Fructose-1,6-/sedoheptulose-1,7-bisphosphate aldolase (cbbA), found in Nitrobacter vulgaris.